Consider the following 334-residue polypeptide: Glyceraldehyde-3-phosphate dehydrogenase 2 (334 aa).

NAD(+)-binding positions include 12–13, Asp35, and Arg79; that span reads RI. D-glyceraldehyde 3-phosphate contacts are provided by residues 152–154, Thr183, Arg198, 211–212, and Arg234; these read SCT and SG. Cys153 acts as the Nucleophile in catalysis. NAD(+) is bound at residue Asn315.

Belongs to the glyceraldehyde-3-phosphate dehydrogenase family. As to quaternary structure, homotetramer.

Its subcellular location is the cytoplasm. It carries out the reaction D-glyceraldehyde 3-phosphate + phosphate + NAD(+) = (2R)-3-phospho-glyceroyl phosphate + NADH + H(+). Its pathway is carbohydrate degradation; glycolysis; pyruvate from D-glyceraldehyde 3-phosphate: step 1/5. Inhibited by pentalenolactone (PL). Functionally, catalyzes the oxidative phosphorylation of glyceraldehyde 3-phosphate (G3P) to 1,3-bisphosphoglycerate (BPG) using the cofactor NAD. The first reaction step involves the formation of a hemiacetal intermediate between G3P and a cysteine residue, and this hemiacetal intermediate is then oxidized to a thioester, with concomitant reduction of NAD to NADH. The reduced NADH is then exchanged with the second NAD, and the thioester is attacked by a nucleophilic inorganic phosphate to produce BPG. This chain is Glyceraldehyde-3-phosphate dehydrogenase 2 (gap2), found in Streptomyces arenae.